A 302-amino-acid polypeptide reads, in one-letter code: Protoheme IX farnesyltransferase (302 aa).

Transmembrane regions (helical) follow at residues valine 28–proline 48, tryptophan 50–valine 70, isoleucine 95–leucine 115, leucine 122–leucine 142, isoleucine 150–glycine 170, alanine 176–isoleucine 196, leucine 221–glycine 241, serine 243–valine 263, and isoleucine 282–alanine 302.

This sequence belongs to the UbiA prenyltransferase family. Protoheme IX farnesyltransferase subfamily.

It localises to the cell inner membrane. The enzyme catalyses heme b + (2E,6E)-farnesyl diphosphate + H2O = Fe(II)-heme o + diphosphate. Its pathway is porphyrin-containing compound metabolism; heme O biosynthesis; heme O from protoheme: step 1/1. Converts heme B (protoheme IX) to heme O by substitution of the vinyl group on carbon 2 of heme B porphyrin ring with a hydroxyethyl farnesyl side group. The protein is Protoheme IX farnesyltransferase of Marinobacter nauticus (strain ATCC 700491 / DSM 11845 / VT8) (Marinobacter aquaeolei).